The sequence spans 100 residues: NADH-quinone oxidoreductase subunit K 1 (100 aa).

A run of 3 helical transmembrane segments spans residues 4–24, 29–49, and 60–80; these read LHSY…GVLV, IVIF…FIAL, and IFVF…LALM.

It belongs to the complex I subunit 4L family. As to quaternary structure, NDH-1 is composed of 14 different subunits. Subunits NuoA, H, J, K, L, M, N constitute the membrane sector of the complex.

It localises to the cell inner membrane. The catalysed reaction is a quinone + NADH + 5 H(+)(in) = a quinol + NAD(+) + 4 H(+)(out). In terms of biological role, NDH-1 shuttles electrons from NADH, via FMN and iron-sulfur (Fe-S) centers, to quinones in the respiratory chain. The immediate electron acceptor for the enzyme in this species is believed to be ubiquinone. Couples the redox reaction to proton translocation (for every two electrons transferred, four hydrogen ions are translocated across the cytoplasmic membrane), and thus conserves the redox energy in a proton gradient. This Geobacter sulfurreducens (strain ATCC 51573 / DSM 12127 / PCA) protein is NADH-quinone oxidoreductase subunit K 1.